The following is a 107-amino-acid chain: uncharacterized protein (107 aa).

Polar residues predominate over residues 1-14; that stretch reads MTERNASGRMNTKG. Residues 1–20 are disordered; it reads MTERNASGRMNTKGRSIKET.

The protein resides in the mitochondrion. This is an uncharacterized protein from Arabidopsis thaliana (Mouse-ear cress).